The chain runs to 132 residues: Fluoride-specific ion channel FluC 2 (132 aa).

The next 4 membrane-spanning stretches (helical) occupy residues 12 to 32 (LTEL…RWQL), 41 to 61 (LLVN…PVAP), 65 to 85 (LLVG…MLAA), and 96 to 116 (AALG…ALGF). Residues Gly73 and Thr76 each contribute to the Na(+) site.

Belongs to the fluoride channel Fluc/FEX (TC 1.A.43) family.

Its subcellular location is the cell inner membrane. It catalyses the reaction fluoride(in) = fluoride(out). Na(+) is not transported, but it plays an essential structural role and its presence is essential for fluoride channel function. Fluoride-specific ion channel. Important for reducing fluoride concentration in the cell, thus reducing its toxicity. The protein is Fluoride-specific ion channel FluC 2 of Parasynechococcus marenigrum (strain WH8102).